A 409-amino-acid polypeptide reads, in one-letter code: L-cysteine:1D-myo-inositol 2-amino-2-deoxy-alpha-D-glucopyranoside ligase (409 aa).

Position 25 (C25) interacts with Zn(2+). L-cysteinyl-5'-AMP is bound by residues 25–28, T40, and 63–65; these read CGIT and NVT. Residues 27 to 37 carry the 'HIGH' region motif; that stretch reads ITPYDATHIGH. The short motif at 179–184 is the 'ERGGDP' region element; sequence ERGGDP. W219 provides a ligand contact to L-cysteinyl-5'-AMP. Position 223 (C223) interacts with Zn(2+). Residue 241–243 coordinates L-cysteinyl-5'-AMP; sequence GSD. H248 contacts Zn(2+). V274 is a binding site for L-cysteinyl-5'-AMP. The 'KMSKS' region signature appears at 280–284; the sequence is KMSKS.

This sequence belongs to the class-I aminoacyl-tRNA synthetase family. MshC subfamily. In terms of assembly, monomer. Zn(2+) serves as cofactor.

It catalyses the reaction 1D-myo-inositol 2-amino-2-deoxy-alpha-D-glucopyranoside + L-cysteine + ATP = 1D-myo-inositol 2-(L-cysteinylamino)-2-deoxy-alpha-D-glucopyranoside + AMP + diphosphate + H(+). Its function is as follows. Catalyzes the ATP-dependent condensation of GlcN-Ins and L-cysteine to form L-Cys-GlcN-Ins. The sequence is that of L-cysteine:1D-myo-inositol 2-amino-2-deoxy-alpha-D-glucopyranoside ligase from Clavibacter sepedonicus (Clavibacter michiganensis subsp. sepedonicus).